A 448-amino-acid chain; its full sequence is tRNA-2-methylthio-N(6)-dimethylallyladenosine synthase (448 aa).

In terms of domain architecture, MTTase N-terminal spans 7–123; the sequence is RSFYIHTFGC…LPALIGDAEE (117 aa). [4Fe-4S] cluster-binding residues include C16, C52, C86, C159, C163, and C166. The region spanning 145 to 375 is the Radical SAM core domain; the sequence is REVGVGAFVP…IDLQLSISAE (231 aa). The TRAM domain maps to 378-441; that stretch reads QEAVGSVVDV…SATLTGVNQG (64 aa).

Belongs to the methylthiotransferase family. MiaB subfamily. In terms of assembly, monomer. The cofactor is [4Fe-4S] cluster.

The protein resides in the cytoplasm. The enzyme catalyses N(6)-dimethylallyladenosine(37) in tRNA + (sulfur carrier)-SH + AH2 + 2 S-adenosyl-L-methionine = 2-methylsulfanyl-N(6)-dimethylallyladenosine(37) in tRNA + (sulfur carrier)-H + 5'-deoxyadenosine + L-methionine + A + S-adenosyl-L-homocysteine + 2 H(+). Functionally, catalyzes the methylthiolation of N6-(dimethylallyl)adenosine (i(6)A), leading to the formation of 2-methylthio-N6-(dimethylallyl)adenosine (ms(2)i(6)A) at position 37 in tRNAs that read codons beginning with uridine. The chain is tRNA-2-methylthio-N(6)-dimethylallyladenosine synthase from Chlorobium phaeovibrioides (strain DSM 265 / 1930) (Prosthecochloris vibrioformis (strain DSM 265)).